The chain runs to 145 residues: Protein SprT-like (145 aa).

Positions 4 to 140 (TNYVQEVSLA…VCGNCHGKLM (137 aa)) constitute a SprT-like domain. H64 lines the Zn(2+) pocket. E65 is a catalytic residue. H68 serves as a coordination point for Zn(2+).

This sequence belongs to the SprT family. Requires Zn(2+) as cofactor.

The protein resides in the cytoplasm. The chain is Protein SprT-like from Streptococcus pyogenes serotype M1.